We begin with the raw amino-acid sequence, 224 residues long: ATP synthase subunit b (224 aa).

The chain crosses the membrane as a helical span at residues 2-22; the sequence is TPSLGLIFWQSVIFLISFIIL.

Belongs to the ATPase B chain family. As to quaternary structure, F-type ATPases have 2 components, F(1) - the catalytic core - and F(0) - the membrane proton channel. F(1) has five subunits: alpha(3), beta(3), gamma(1), delta(1), epsilon(1). F(0) has three main subunits: a(1), b(2) and c(10-14). The alpha and beta chains form an alternating ring which encloses part of the gamma chain. F(1) is attached to F(0) by a central stalk formed by the gamma and epsilon chains, while a peripheral stalk is formed by the delta and b chains.

Its subcellular location is the cell membrane. Functionally, f(1)F(0) ATP synthase produces ATP from ADP in the presence of a proton or sodium gradient. F-type ATPases consist of two structural domains, F(1) containing the extramembraneous catalytic core and F(0) containing the membrane proton channel, linked together by a central stalk and a peripheral stalk. During catalysis, ATP synthesis in the catalytic domain of F(1) is coupled via a rotary mechanism of the central stalk subunits to proton translocation. Component of the F(0) channel, it forms part of the peripheral stalk, linking F(1) to F(0). The chain is ATP synthase subunit b from Karelsulcia muelleri (strain GWSS) (Sulcia muelleri).